A 154-amino-acid chain; its full sequence is Protein X (154 aa).

A mitochondrial targeting sequence region spans residues 68–117 (PCALRFTSARRMETTVNANQVLPKVLHKRTLGLSALSTTDLEAYFKDCVF).

This sequence belongs to the orthohepadnavirus protein X family. As to quaternary structure, may form homodimer. May interact with host CEBPA, CFLAR, CREB1, DDB1, E4F1, HBXIP, HSPD1/HSP60, NFKBIA, POLR2E and SMAD4. Interacts with host SMC5-SMC6 complex and induces its degradation. Interacts with host TRPC4AP; leading to prevent ubiquitination of TRPC4AP. Interacts with host PLSCR1; this interaction promotes ubiquitination and degradation of HBx and impairs HBx-mediated cell proliferation. A fraction may be phosphorylated in insect cells and HepG2 cells, a human hepatoblastoma cell line. Phosphorylated in vitro by host protein kinase C or mitogen-activated protein kinase. N-acetylated in insect cells.

It localises to the host cytoplasm. The protein localises to the host nucleus. Its subcellular location is the host mitochondrion. Its function is as follows. Multifunctional protein that plays a role in silencing host antiviral defenses and promoting viral transcription. Does not seem to be essential for HBV infection. May be directly involved in development of cirrhosis and liver cancer (hepatocellular carcinoma). Most of cytosolic activities involve modulation of cytosolic calcium. The effect on apoptosis is controversial depending on the cell types in which the studies have been conducted. May induce apoptosis by localizing in mitochondria and causing loss of mitochondrial membrane potential. May also modulate apoptosis by binding host CFLAR, a key regulator of the death-inducing signaling complex (DISC). Promotes viral transcription by using the host E3 ubiquitin ligase DDB1 to target the SMC5-SMC6 complex to proteasomal degradation. This host complex would otherwise bind to viral episomal DNA, and prevents its transcription. Moderately stimulates transcription of many different viral and cellular transcription elements. Promoters and enhancers stimulated by HBx contain DNA binding sites for NF-kappa-B, AP-1, AP-2, c-EBP, ATF/CREB, or the calcium-activated factor NF-AT. The chain is Protein X from Homo sapiens (Human).